The sequence spans 173 residues: MSTNNTQDDAAEEEDDDLQYFVRIGTTDLDGTKAVERSLTDMKGIGKRTARIITDVASVDRHATFGLLEEDEIDSITDAVENLDDHIPGWMTNRREDFFSGDTDHKTGADLEEKRRHDVNRMKMIDSYKGVRHKRGQKVRGQRTKSTGRTEGTIGVNVEAIKEEAAEAAEEEE.

Positions 130–143 (GVRHKRGQKVRGQR) are enriched in basic residues. The segment at 130–155 (GVRHKRGQKVRGQRTKSTGRTEGTIG) is disordered.

This sequence belongs to the universal ribosomal protein uS13 family. As to quaternary structure, part of the 30S ribosomal subunit. Forms a loose heterodimer with protein S19. Forms two bridges to the 50S subunit in the 70S ribosome.

In terms of biological role, located at the top of the head of the 30S subunit, it contacts several helices of the 16S rRNA. In the 70S ribosome it contacts the 23S rRNA (bridge B1a) and protein L5 of the 50S subunit (bridge B1b), connecting the 2 subunits; these bridges are implicated in subunit movement. This Haloquadratum walsbyi (strain DSM 16790 / HBSQ001) protein is Small ribosomal subunit protein uS13.